Consider the following 72-residue polypeptide: Probable movement protein p8 (72 aa).

Positions 16–58 (GRARSVEGKKHNGSGLTGVKRHAVSETSQKSQQGTGNGTMTNI) are disordered. The span at 40–58 (SETSQKSQQGTGNGTMTNI) shows a compositional bias: polar residues.

This sequence belongs to the carmovirus/necrovirus/panicovirus movement protein p8 family.

In terms of biological role, cell-to-cell movement. The sequence is that of Probable movement protein p8 from Tobacco necrosis virus (strain A) (TNV-A).